A 526-amino-acid polypeptide reads, in one-letter code: ATP synthase subunit alpha (526 aa).

An ATP-binding site is contributed by 171–178; that stretch reads GDRQTGKT.

Belongs to the ATPase alpha/beta chains family. F-type ATPases have 2 components, CF(1) - the catalytic core - and CF(0) - the membrane proton channel. CF(1) has five subunits: alpha(3), beta(3), gamma(1), delta(1), epsilon(1). CF(0) has three main subunits: a(1), b(2) and c(9-12). The alpha and beta chains form an alternating ring which encloses part of the gamma chain. CF(1) is attached to CF(0) by a central stalk formed by the gamma and epsilon chains, while a peripheral stalk is formed by the delta and b chains.

The protein resides in the cell inner membrane. The catalysed reaction is ATP + H2O + 4 H(+)(in) = ADP + phosphate + 5 H(+)(out). Functionally, produces ATP from ADP in the presence of a proton gradient across the membrane. The alpha chain is a regulatory subunit. This is ATP synthase subunit alpha from Cytophaga hutchinsonii (strain ATCC 33406 / DSM 1761 / CIP 103989 / NBRC 15051 / NCIMB 9469 / D465).